The following is an 85-amino-acid chain: Small ribosomal subunit protein uS17 (85 aa).

It belongs to the universal ribosomal protein uS17 family. In terms of assembly, part of the 30S ribosomal subunit.

In terms of biological role, one of the primary rRNA binding proteins, it binds specifically to the 5'-end of 16S ribosomal RNA. This chain is Small ribosomal subunit protein uS17, found in Anaeromyxobacter dehalogenans (strain 2CP-1 / ATCC BAA-258).